The following is a 341-amino-acid chain: tRNA N6-adenosine threonylcarbamoyltransferase (341 aa).

2 residues coordinate Fe cation: H111 and H115. Substrate is bound by residues 134-138 (LVSGG), D167, G180, and N276. D304 provides a ligand contact to Fe cation.

This sequence belongs to the KAE1 / TsaD family. It depends on Fe(2+) as a cofactor.

Its subcellular location is the cytoplasm. The enzyme catalyses L-threonylcarbamoyladenylate + adenosine(37) in tRNA = N(6)-L-threonylcarbamoyladenosine(37) in tRNA + AMP + H(+). Required for the formation of a threonylcarbamoyl group on adenosine at position 37 (t(6)A37) in tRNAs that read codons beginning with adenine. Is involved in the transfer of the threonylcarbamoyl moiety of threonylcarbamoyl-AMP (TC-AMP) to the N6 group of A37, together with TsaE and TsaB. TsaD likely plays a direct catalytic role in this reaction. This Azotobacter vinelandii (strain DJ / ATCC BAA-1303) protein is tRNA N6-adenosine threonylcarbamoyltransferase.